We begin with the raw amino-acid sequence, 608 residues long: Rap1 GTPase-GDP dissociation stimulator 1 (608 aa).

ARM repeat units lie at residues Gly89 to Gly131 and Asp171 to Glu212. Positions Glu122–Asp171 are prevents binding to prenylated RHOA. Lys231 carries the post-translational modification N6-acetyllysine. 3 ARM repeats span residues Asp348–Ile391, Pro392–Asp432, and Ser480–Ala520.

Interacts with RABL3. Interacts with RHOT1. In terms of assembly, interacts with unprenylated RHOA; the interaction is direct. Interacts with RAP1A. Interacts with KRAS. Interacts with RAC1. Interacts with RAP1B. Preferentially interacts with unprenylated GTPases that will become geranylgeranylated. May also interact with prenylated GTPases. As to quaternary structure, interacts with prenylated RHOA; the interaction is direct and in a 1:1 stoichiometry. Interacts with RAP1A. Interacts with KRAS. Interacts with RAC1. Interacts with RAP1B. Preferentially interacts with prenylated GTPases. In terms of processing, the N-terminus is blocked. Forms covalent cross-links mediated by transglutaminase TGM2, between a glutamine and the epsilon-amino group of a lysine residue, forming homopolymers and heteropolymers. Brain.

Its subcellular location is the cytoplasm. It localises to the cytosol. It is found in the endoplasmic reticulum. The protein resides in the mitochondrion. The protein localises to the nucleus. In terms of biological role, acts as a GEF (guanine nucleotide exchange factor) for the Rho family of small GTP-binding proteins (G proteins) that stimulates the dissociation of GDP to enable subsequent binding of GTP. Additionally, appears to chaperone the processing and/or trafficking of small GTPases containing a C-terminal polybasic region independently of GEF activity. Targets include RAP1A/RAP1B, RHOA, RHOB, RHOC, RAC1 and KRAS. Regulates mitochondrial dynamics by controlling RHOT function to promote mitochondrial fission during high calcium conditions. Able to promote the Ca(2+) release from the endoplasmic reticulum via both inositol trisphosphate (Ins3P) and ryanodine sensitive receptors leading to a enhanced mitochondrial Ca(2+) uptake. Functionally, acts as a GEF (guanine nucleotide exchange factor) for unprenylated RHOA. Chaperones the entry and passage of small GTPases through the prenylation pathway. Recognizes the last amino acid in the GTPase C-terminal CAAX motif with a preference for 'Leu' over 'Met', indicating involvement in the geranylgeranylation pathway. May also recognize prenylated GTPases. Acts as a GEF (guanine nucleotide exchange factor) for prenylated RHOA. Acts as a GEF for RHOC. Chaperones the downstream trafficking and/or processing of small newly prenylated GTPases. Escorts RAC1 to the nucleus. The polypeptide is Rap1 GTPase-GDP dissociation stimulator 1 (RAP1GDS1) (Bos taurus (Bovine)).